A 276-amino-acid chain; its full sequence is Energy-coupling factor transporter ATP-binding protein EcfA2 (276 aa).

The region spanning 1 to 233 (MKTPFERLAL…GEEMAGWGLD (233 aa)) is the ABC transporter domain. Position 27–34 (27–34 (GHTGSGKS)) interacts with ATP. E158 (proton acceptor) is an active-site residue.

The protein belongs to the ABC transporter superfamily. Energy-coupling factor EcfA family. As to quaternary structure, forms a stable energy-coupling factor (ECF) transporter complex composed of 2 membrane-embedded substrate-binding proteins (S component), 2 ATP-binding proteins (A component) and 2 transmembrane proteins (T component).

The protein localises to the cell membrane. In terms of biological role, ATP-binding (A) component of a common energy-coupling factor (ECF) ABC-transporter complex. Unlike classic ABC transporters this ECF transporter provides the energy necessary to transport a number of different substrates. The chain is Energy-coupling factor transporter ATP-binding protein EcfA2 from Bacillus subtilis (strain 168).